Consider the following 96-residue polypeptide: Protein RnfH (96 aa).

The protein belongs to the UPF0125 (RnfH) family.

The sequence is that of Protein RnfH from Cronobacter sakazakii (strain ATCC BAA-894) (Enterobacter sakazakii).